The sequence spans 491 residues: ATP synthase subunit beta, chloroplastic (491 aa).

163–170 (GGAGVGKT) contributes to the ATP binding site.

The protein belongs to the ATPase alpha/beta chains family. F-type ATPases have 2 components, CF(1) - the catalytic core - and CF(0) - the membrane proton channel. CF(1) has five subunits: alpha(3), beta(3), gamma(1), delta(1), epsilon(1). CF(0) has four main subunits: a(1), b(1), b'(1) and c(9-12).

The protein localises to the plastid. It localises to the chloroplast thylakoid membrane. It carries out the reaction ATP + H2O + 4 H(+)(in) = ADP + phosphate + 5 H(+)(out). In terms of biological role, produces ATP from ADP in the presence of a proton gradient across the membrane. The catalytic sites are hosted primarily by the beta subunits. In Nephroselmis olivacea (Green alga), this protein is ATP synthase subunit beta, chloroplastic.